Consider the following 106-residue polypeptide: Large ribosomal subunit protein eL42 (106 aa).

It belongs to the eukaryotic ribosomal protein eL42 family.

This is Large ribosomal subunit protein eL42 (RPL44) from Meyerozyma guilliermondii (strain ATCC 6260 / CBS 566 / DSM 6381 / JCM 1539 / NBRC 10279 / NRRL Y-324) (Yeast).